The following is a 112-amino-acid chain: UPF0342 protein SSU05_1260 (112 aa).

This sequence belongs to the UPF0342 family.

This chain is UPF0342 protein SSU05_1260, found in Streptococcus suis (strain 05ZYH33).